A 443-amino-acid chain; its full sequence is Probable glycine dehydrogenase (decarboxylating) subunit 1 (443 aa).

It belongs to the GcvP family. N-terminal subunit subfamily. In terms of assembly, the glycine cleavage system is composed of four proteins: P, T, L and H. In this organism, the P 'protein' is a heterodimer of two subunits.

The enzyme catalyses N(6)-[(R)-lipoyl]-L-lysyl-[glycine-cleavage complex H protein] + glycine + H(+) = N(6)-[(R)-S(8)-aminomethyldihydrolipoyl]-L-lysyl-[glycine-cleavage complex H protein] + CO2. The glycine cleavage system catalyzes the degradation of glycine. The P protein binds the alpha-amino group of glycine through its pyridoxal phosphate cofactor; CO(2) is released and the remaining methylamine moiety is then transferred to the lipoamide cofactor of the H protein. The protein is Probable glycine dehydrogenase (decarboxylating) subunit 1 of Koribacter versatilis (strain Ellin345).